Consider the following 400-residue polypeptide: Opsin-3 (400 aa).

Residues 1–38 are Extracellular-facing; it reads MYSGNRSGDQGYWEDGAGAEGAAPAGTRSPAPLFSPTA. N5 carries N-linked (GlcNAc...) asparagine glycosylation. The chain crosses the membrane as a helical span at residues 39 to 63; it reads YERLALLLGCLALLGVGGNLLVLLL. At 64-75 the chain is on the cytoplasmic side; the sequence is YSKFPRLRTPTH. A helical membrane pass occupies residues 76–100; that stretch reads LFLVNLSLGDLLVSLFGVTFTFASC. At 101-115 the chain is on the extracellular side; it reads LRNGWVWDAVGCAWD. A disulfide bridge links C112 with C186. Residues 116–135 traverse the membrane as a helical segment; the sequence is GFSGSLFGFVSITTLTVLAY. Over 136 to 151 the chain is Cytoplasmic; sequence ERYIRVVHARVINFSW. Residues 152–175 traverse the membrane as a helical segment; sequence AWRAITYIWLYSLAWAGAPLLGWN. Topologically, residues 176-199 are extracellular; it reads RYILDIHGLGCTVDWRSKDANDSS. N196 is a glycosylation site (N-linked (GlcNAc...) asparagine). A helical membrane pass occupies residues 200–227; it reads FVLFLFLGCLVVPVGIIAHCYGHILYSV. Residues 228-253 are Cytoplasmic-facing; the sequence is RMLRCVEDLQTIQVIKMLRYEKKVAK. A helical transmembrane segment spans residues 254 to 277; sequence MCFLMAFVFLTCWMPYIVTRFLVV. Over 278–285 the chain is Extracellular; sequence NGYGHLVT. Residues 286–310 traverse the membrane as a helical segment; the sequence is PTVSIVSYLFAKSSTVYNPVIYIFM. K297 carries the post-translational modification N6-(retinylidene)lysine. Over 311-400 the chain is Cytoplasmic; that stretch reads NRKFRRSLLQ…KVDVIQVRPL (90 aa). The S-palmitoyl cysteine moiety is linked to residue C323.

Belongs to the G-protein coupled receptor 1 family. Opsin subfamily. Interacts with MC1R; the interaction results in a decrease in MC1R-mediated cAMP signaling and ultimately a decrease in melanin production in melanocytes. In terms of tissue distribution, expressed in the eye (at protein level). Expressed in tracheal airway smooth muscle. Expressed in brown adipocyte tissue; expression becomes more abundant during differentiation. Strongly expressed in brain. Highly expressed in the preoptic area and paraventricular nucleus of the hypothalamus. Shows highly patterned expression in other regions of the brain, being enriched in selected regions of the cerebral cortex, cerebellar Purkinje cells, a subset of striatal neurons, selected thalamic nuclei, and a subset of interneurons in the ventral horn of the spinal cord.

It localises to the cell membrane. Its subcellular location is the cytoplasm. In terms of biological role, G-protein coupled receptor which selectively activates G proteins via ultraviolet A (UVA) light-mediated activation in the skin. Binds both 11-cis retinal and all-trans retinal. Regulates melanogenesis in melanocytes via inhibition of alpha-MSH-induced MC1R-mediated cAMP signaling, modulation of calcium flux, regulation of CAMK2 phosphorylation, and subsequently phosphorylation of CREB, p38, ERK and MITF in response to blue light. Plays a role in melanocyte survival through regulation of intracellular calcium levels and subsequent BCL2/RAF1 signaling. Additionally regulates apoptosis via cytochrome c release and subsequent activation of the caspase cascade. Required for TYR and DCT blue light-induced complex formation in melanocytes. Involved in keratinocyte differentiation in response to blue-light. Required for the UVA-mediated induction of calcium and mitogen-activated protein kinase signaling resulting in the expression of MMP1, MMP2, MMP3, MMP9 and TIMP1 in dermal fibroblasts. Plays a role in light-mediated glucose uptake, mitochondrial respiration and fatty acid metabolism in brown adipocyte tissues. May be involved in photorelaxation of airway smooth muscle cells, via blue-light dependent GPCR signaling pathways. The polypeptide is Opsin-3 (Opn3) (Mus musculus (Mouse)).